The following is a 267-amino-acid chain: Phosphatidylglycerol--prolipoprotein diacylglyceryl transferase (267 aa).

3 helical membrane passes run 21 to 41 (VSLH…YWLG), 60 to 80 (LLFN…VFFY), and 95 to 115 (IWEG…AMLW). Residue R143 coordinates a 1,2-diacyl-sn-glycero-3-phospho-(1'-sn-glycerol). 2 consecutive transmembrane segments (helical) span residues 203-223 (GSVA…VEYF) and 240-260 (GQLL…VAYY).

The protein belongs to the Lgt family.

Its subcellular location is the cell inner membrane. It carries out the reaction L-cysteinyl-[prolipoprotein] + a 1,2-diacyl-sn-glycero-3-phospho-(1'-sn-glycerol) = an S-1,2-diacyl-sn-glyceryl-L-cysteinyl-[prolipoprotein] + sn-glycerol 1-phosphate + H(+). It participates in protein modification; lipoprotein biosynthesis (diacylglyceryl transfer). Functionally, catalyzes the transfer of the diacylglyceryl group from phosphatidylglycerol to the sulfhydryl group of the N-terminal cysteine of a prolipoprotein, the first step in the formation of mature lipoproteins. The chain is Phosphatidylglycerol--prolipoprotein diacylglyceryl transferase from Glaesserella parasuis serovar 5 (strain SH0165) (Haemophilus parasuis).